We begin with the raw amino-acid sequence, 203 residues long: Cytochrome c oxidase assembly protein CtaG (203 aa).

The Cytoplasmic segment spans residues 1–19; sequence MDAGKAERRAGNGRRTDGR. Residues 20-42 form a helical; Signal-anchor for type II membrane protein membrane-spanning segment; it reads RHLVVAAACAAFIAAMVGVTYAS. At 43–203 the chain is on the periplasmic side; sequence VPLYAMFCAL…AAARASGTGG (161 aa).

Belongs to the COX11/CtaG family.

The protein resides in the cell inner membrane. Exerts its effect at some terminal stage of cytochrome c oxidase synthesis, probably by being involved in the insertion of the copper B into subunit I. This Xanthobacter autotrophicus (strain ATCC BAA-1158 / Py2) protein is Cytochrome c oxidase assembly protein CtaG.